A 284-amino-acid polypeptide reads, in one-letter code: Bifunctional protein FolD (284 aa).

Residues Gly-166 to Ser-168 and Ile-232 each bind NADP(+).

This sequence belongs to the tetrahydrofolate dehydrogenase/cyclohydrolase family. As to quaternary structure, homodimer.

It catalyses the reaction (6R)-5,10-methylene-5,6,7,8-tetrahydrofolate + NADP(+) = (6R)-5,10-methenyltetrahydrofolate + NADPH. It carries out the reaction (6R)-5,10-methenyltetrahydrofolate + H2O = (6R)-10-formyltetrahydrofolate + H(+). It functions in the pathway one-carbon metabolism; tetrahydrofolate interconversion. Its function is as follows. Catalyzes the oxidation of 5,10-methylenetetrahydrofolate to 5,10-methenyltetrahydrofolate and then the hydrolysis of 5,10-methenyltetrahydrofolate to 10-formyltetrahydrofolate. The protein is Bifunctional protein FolD of Shewanella sp. (strain MR-7).